Consider the following 442-residue polypeptide: Protein translocase subunit SecY (442 aa).

Helical transmembrane passes span 29-49, 69-89, 126-146, 153-173, 182-202, 217-237, 274-294, 320-340, 377-397, and 400-420; these read LITIGLLILVRVGIFIPVPDI, IFTGGGLSTVGIFALGILPYI, YIAFGWCIIQGLGLTVGLLRP, PLFIFQTVLAITAGSMFVMWI, IGNGASLLIFVNIVATLPQTL, ITAVVLLMLVFLVMIVGIVFV, VMPIIFASAVLILPSSLAGFA, VYTVVYSVMIFFFSYFYASLI, LTFLGAIFLSFVATLPIFVEQ, and GVTTFQGLGATSLLILVGVAI.

It belongs to the SecY/SEC61-alpha family. As to quaternary structure, component of the Sec protein translocase complex. Heterotrimer consisting of SecY, SecE and SecG subunits. The heterotrimers can form oligomers, although 1 heterotrimer is thought to be able to translocate proteins. Interacts with the ribosome. Interacts with SecDF, and other proteins may be involved. Interacts with SecA.

The protein resides in the cell inner membrane. Its subcellular location is the cellular thylakoid membrane. In terms of biological role, the central subunit of the protein translocation channel SecYEG. Consists of two halves formed by TMs 1-5 and 6-10. These two domains form a lateral gate at the front which open onto the bilayer between TMs 2 and 7, and are clamped together by SecE at the back. The channel is closed by both a pore ring composed of hydrophobic SecY resides and a short helix (helix 2A) on the extracellular side of the membrane which forms a plug. The plug probably moves laterally to allow the channel to open. The ring and the pore may move independently. This chain is Protein translocase subunit SecY, found in Synechocystis sp. (strain ATCC 27184 / PCC 6803 / Kazusa).